Consider the following 147-residue polypeptide: Transthyretin (147 aa).

A signal peptide spans 1–20 (MASHRLLLLCLAGLVFVSEA). Cys30 carries the sulfocysteine modification. L-thyroxine is bound at residue Lys35. Glu62 bears the 4-carboxyglutamate mark. At Ser72 the chain carries Phosphoserine. Glu74 provides a ligand contact to L-thyroxine. Asn118 carries N-linked (GlcNAc...) asparagine glycosylation. L-thyroxine is bound at residue Ser137.

The protein belongs to the transthyretin family. As to quaternary structure, homotetramer. Dimer of dimers. In the homotetramer, subunits assemble around a central channel that can accommodate two ligand molecules. Interacts with RBP4. In terms of processing, sulfonation of the reactive cysteine Cys-30 enhances the stability of the native conformation of TTR, avoiding misassembly of the protein leading to amyloid formation. As to expression, detected in liver.

It localises to the secreted. Thyroid hormone-binding protein. Probably transports thyroxine from the bloodstream to the brain. In Pongo abelii (Sumatran orangutan), this protein is Transthyretin (TTR).